A 456-amino-acid polypeptide reads, in one-letter code: MIKFDDKQLNNIVEQDGDKHFFIETWGCQMNEEDSEKLSGMLKSQGYEETENRDEASIVIFNTCCVRENAENKVFGNLGRLKNQKEKNPNLIIALCGCMMQQKGMADEILSRFPYVDIIFGTHNAYKFPEYLHRVQVEGVQVKEIFDKETEIVEGVPIDRKSNVKAFVTIMYGCNNFCTYCVVPYVRGRERSRRPEDIENEIKELVSSGYKEITLLGQNVNSYGKGLEEEITFAQLLRRINEIDGLERLRFMTSHPKDLTLDVVYAIRDCDKLCEQIHLPVQSGSNEILQKMNRHYNKEQYLELAKKIREEIPDVTFSTDIIVGFPGETEEDFEETINLVKEVRYDAAFTFIYSRRNHTPADKMENQIPDDVKHDRFNRLVAAVNEGIVVGNKAAEGKIYEVLVEGTSKNNENKLTGRTRNAKLVNFDGCKEMIGKLVKVKIIEAKSFSLVGEVVE.

Positions 19 to 137 (KHFFIETWGC…FPEYLHRVQV (119 aa)) constitute an MTTase N-terminal domain. [4Fe-4S] cluster is bound by residues Cys-28, Cys-64, Cys-98, Cys-174, Cys-178, and Cys-181. A Radical SAM core domain is found at 160–392 (RKSNVKAFVT…AVNEGIVVGN (233 aa)). In terms of domain architecture, TRAM spans 393–456 (KAAEGKIYEV…SFSLVGEVVE (64 aa)).

This sequence belongs to the methylthiotransferase family. MiaB subfamily. As to quaternary structure, monomer. It depends on [4Fe-4S] cluster as a cofactor.

Its subcellular location is the cytoplasm. It catalyses the reaction N(6)-dimethylallyladenosine(37) in tRNA + (sulfur carrier)-SH + AH2 + 2 S-adenosyl-L-methionine = 2-methylsulfanyl-N(6)-dimethylallyladenosine(37) in tRNA + (sulfur carrier)-H + 5'-deoxyadenosine + L-methionine + A + S-adenosyl-L-homocysteine + 2 H(+). In terms of biological role, catalyzes the methylthiolation of N6-(dimethylallyl)adenosine (i(6)A), leading to the formation of 2-methylthio-N6-(dimethylallyl)adenosine (ms(2)i(6)A) at position 37 in tRNAs that read codons beginning with uridine. This Clostridium botulinum (strain Eklund 17B / Type B) protein is tRNA-2-methylthio-N(6)-dimethylallyladenosine synthase.